The following is an 847-amino-acid chain: Pollen-specific leucine-rich repeat extensin-like protein 2 (847 aa).

The first 20 residues, Met-1 to Ala-20, serve as a signal peptide directing secretion. 8 LRR repeats span residues Ile-45–Lys-71, Leu-106–Met-130, Thr-131–Lys-153, Ala-155–Trp-178, Pro-179–Lys-202, Leu-204–Lys-224, Lys-226–Met-248, and Lys-249–Asn-273. N-linked (GlcNAc...) asparagine glycosylation is found at Asn-260 and Asn-274. LRR repeat units follow at residues Leu-296–Lys-319 and Pro-321–Gly-343. Residues Lys-381–Tyr-847 are disordered. Residues Pro-438–Lys-484 show a composition bias toward basic and acidic residues. Pro residues-rich tracts occupy residues Pro-485–Pro-499 and Val-533–Thr-642. The contains the Ser-Pro(4) repeats stretch occupies residues Ser-522–Tyr-847. 3 stretches are compositionally biased toward polar residues: residues Gln-667–Ser-682, Thr-688–Gln-720, and Gln-726–Pro-752. Composition is skewed to low complexity over residues Pro-768 to Glu-783 and Asn-797 to Ser-811. Positions Ser-838 to Tyr-847 are enriched in pro residues.

In terms of processing, hydroxylated on proline residues in the S-P-P-P-P repeat. Post-translationally, O-glycosylated on hydroxyprolines. In terms of tissue distribution, expressed in flowers, stamen, pollen, and pollinated carpels (at protein level).

It is found in the secreted. The protein localises to the cell wall. Functionally, modulates cell morphogenesis by regulating cell wall formation and assembly, and/or growth polarization. The sequence is that of Pollen-specific leucine-rich repeat extensin-like protein 2 (PEX2) from Arabidopsis thaliana (Mouse-ear cress).